Consider the following 324-residue polypeptide: MELLPHEKQVVEYEKTIAEFKEKNKKNSLLSSSEIQKLERRLDKLKEKIYSDLTPWERVQICRHPSRPRSVNYIEGMCEEFVELCGDRTFRDDPAVVGGLAKIQGQRFMLIGQEKGCDTASRVHRNFGMLCPEGFRKALRLAKMAEKFGLPIVFLVDTPGAFPGLTAEERGQGWAIANNLFQLARLKTPIIVLVIGEGCSGGALGMAIGDVIAMLEHSYYSVISPEGCASILWKDPKKNSEAAAMLKMHGEDLKQFAIVDVVIKEPVGGAHHDPAAVYRNVQNFILQEWLRLKDLSIEDLLEKRYQKFRTIGLYETSSESGPEA.

The CoA carboxyltransferase C-terminal domain maps to 37–291; it reads KLERRLDKLK…QNFILQEWLR (255 aa).

It belongs to the AccA family. Acetyl-CoA carboxylase is a heterohexamer composed of biotin carboxyl carrier protein (AccB), biotin carboxylase (AccC) and two subunits each of ACCase subunit alpha (AccA) and ACCase subunit beta (AccD).

The protein localises to the cytoplasm. The enzyme catalyses N(6)-carboxybiotinyl-L-lysyl-[protein] + acetyl-CoA = N(6)-biotinyl-L-lysyl-[protein] + malonyl-CoA. Its pathway is lipid metabolism; malonyl-CoA biosynthesis; malonyl-CoA from acetyl-CoA: step 1/1. In terms of biological role, component of the acetyl coenzyme A carboxylase (ACC) complex. First, biotin carboxylase catalyzes the carboxylation of biotin on its carrier protein (BCCP) and then the CO(2) group is transferred by the carboxyltransferase to acetyl-CoA to form malonyl-CoA. The polypeptide is Acetyl-coenzyme A carboxylase carboxyl transferase subunit alpha (Chlamydia caviae (strain ATCC VR-813 / DSM 19441 / 03DC25 / GPIC) (Chlamydophila caviae)).